Consider the following 223-residue polypeptide: Pyridoxine/pyridoxamine 5'-phosphate oxidase (223 aa).

Residues 9-12 (RVGY) and lysine 76 each bind substrate. FMN-binding positions include 71 to 76 (RTVLCK), 86 to 87 (FT), lysine 93, and glutamine 115. Substrate is bound by residues tyrosine 133, arginine 137, and serine 141. FMN-binding positions include 150–151 (QS) and tryptophan 196. 202 to 204 (RMH) lines the substrate pocket. Arginine 206 contacts FMN.

This sequence belongs to the pyridoxamine 5'-phosphate oxidase family. In terms of assembly, homodimer. The cofactor is FMN.

It catalyses the reaction pyridoxamine 5'-phosphate + O2 + H2O = pyridoxal 5'-phosphate + H2O2 + NH4(+). It carries out the reaction pyridoxine 5'-phosphate + O2 = pyridoxal 5'-phosphate + H2O2. It participates in cofactor metabolism; pyridoxal 5'-phosphate salvage; pyridoxal 5'-phosphate from pyridoxamine 5'-phosphate: step 1/1. It functions in the pathway cofactor metabolism; pyridoxal 5'-phosphate salvage; pyridoxal 5'-phosphate from pyridoxine 5'-phosphate: step 1/1. Catalyzes the oxidation of either pyridoxine 5'-phosphate (PNP) or pyridoxamine 5'-phosphate (PMP) into pyridoxal 5'-phosphate (PLP). This chain is Pyridoxine/pyridoxamine 5'-phosphate oxidase, found in Rhodococcus jostii (strain RHA1).